The chain runs to 258 residues: Aspartate/glutamate leucyltransferase (258 aa).

The protein belongs to the R-transferase family. Bpt subfamily.

The protein resides in the cytoplasm. It carries out the reaction N-terminal L-glutamyl-[protein] + L-leucyl-tRNA(Leu) = N-terminal L-leucyl-L-glutamyl-[protein] + tRNA(Leu) + H(+). The enzyme catalyses N-terminal L-aspartyl-[protein] + L-leucyl-tRNA(Leu) = N-terminal L-leucyl-L-aspartyl-[protein] + tRNA(Leu) + H(+). Its function is as follows. Functions in the N-end rule pathway of protein degradation where it conjugates Leu from its aminoacyl-tRNA to the N-termini of proteins containing an N-terminal aspartate or glutamate. This Rhodopseudomonas palustris (strain BisA53) protein is Aspartate/glutamate leucyltransferase.